An 872-amino-acid chain; its full sequence is F-box protein pof6 (872 aa).

The F-box domain maps to 30–75 (FGCLTINIYLKIFTLISTPDLCNCRLVCRKFQQLCDYNSIYVKKLL). Positions 101–122 (MSSNTSKGFHLQSSDKKYADSD) are disordered. The span at 113–122 (SSDKKYADSD) shows a compositional bias: basic and acidic residues.

In terms of assembly, interacts with skp1. Forms a complex with pof6 and skp1.

It localises to the cytoplasm. The protein resides in the nucleus. Together with skp1, essential for septum processing and cell separation. This chain is F-box protein pof6 (pof6), found in Schizosaccharomyces pombe (strain 972 / ATCC 24843) (Fission yeast).